The primary structure comprises 201 residues: ATP-dependent Clp protease proteolytic subunit (201 aa).

Ser-105 serves as the catalytic Nucleophile. His-130 is a catalytic residue.

This sequence belongs to the peptidase S14 family. As to quaternary structure, fourteen ClpP subunits assemble into 2 heptameric rings which stack back to back to give a disk-like structure with a central cavity, resembling the structure of eukaryotic proteasomes.

The protein resides in the cytoplasm. It catalyses the reaction Hydrolysis of proteins to small peptides in the presence of ATP and magnesium. alpha-casein is the usual test substrate. In the absence of ATP, only oligopeptides shorter than five residues are hydrolyzed (such as succinyl-Leu-Tyr-|-NHMec, and Leu-Tyr-Leu-|-Tyr-Trp, in which cleavage of the -Tyr-|-Leu- and -Tyr-|-Trp bonds also occurs).. Cleaves peptides in various proteins in a process that requires ATP hydrolysis. Has a chymotrypsin-like activity. Plays a major role in the degradation of misfolded proteins. This Aquifex aeolicus (strain VF5) protein is ATP-dependent Clp protease proteolytic subunit.